Here is a 653-residue protein sequence, read N- to C-terminus: Multidomain regulatory protein Rv1364c (653 aa).

A phosphothreonine; by PknD mark is found at Thr54 and Thr81. A PAC domain is found at 86–142 (SGSEWRLQTDYDGSGVEERYFDFVVTPRRRADGSIEGVQLIVDDVTSRVRARQAAEA). Positions 177–396 (DIAAEYLVAA…DDVTLLAMQR (220 aa)) constitute a PPM-type phosphatase domain. Mn(2+)-binding residues include Asp211 and Val212. Thr299 is modified (phosphothreonine; by PknD). Positions 328 and 387 each coordinate Mn(2+). Thr390 is modified (phosphothreonine; by PknD). Positions 397–544 (RAPTPPLHIT…TMVRRAAFQQ (148 aa)) are anti-sigma factor kinase region. Phosphoserine; by PknD is present on Ser506. Residues Thr520 and Thr568 each carry the phosphothreonine; by PknD modification. In terms of domain architecture, STAS spans 546–653 (IDSEFVSLVE…ADTEDIFAQE (108 aa)). Ser600 is modified (phosphoserine; by autocatalysis).

Exists in solution as both monomer and dimer. Both the phosphorylated and unphosphorylated proteins form extended dimers. Interacts with SigF. Can efficiently bind to SigF independently of its autophosphorylation. Interaction between SigF and Rv1364c is reduced significantly upon the phosphorylation of both proteins by PknD. The cofactor is Mn(2+). Requires Mg(2+) as cofactor. Post-translationally, autophosphorylated. Phosphorylated by PknD on multiple threonine and serine residues. Phosphorylation is antagonized by the phosphatase activity.

It carries out the reaction O-phospho-L-seryl-[protein] + H2O = L-seryl-[protein] + phosphate. It catalyses the reaction O-phospho-L-threonyl-[protein] + H2O = L-threonyl-[protein] + phosphate. The enzyme catalyses L-seryl-[protein] + ATP = O-phospho-L-seryl-[protein] + ADP + H(+). The catalysed reaction is L-threonyl-[protein] + ATP = O-phospho-L-threonyl-[protein] + ADP + H(+). The phosphatase domain is activated by the anti-sigma factor kinase domain. Primarily acts as an independent SigF regulator that is sensitive to the osmosensory signal, mediating the cross talk of PknD with the SigF regulon. Possesses both phosphatase and kinase activities. The kinase domain functions as a classic anti-sigma factor-like kinase to phosphorylate the anti-anti-sigma factor domain at the canonical regulatory site, and the phosphatase domain antagonizes this activity. This chain is Multidomain regulatory protein Rv1364c, found in Mycobacterium tuberculosis (strain ATCC 25618 / H37Rv).